The primary structure comprises 234 residues: 2,3,4,5-tetrahydropyridine-2,6-dicarboxylate N-acetyltransferase (234 aa).

This sequence belongs to the transferase hexapeptide repeat family. DapH subfamily.

It carries out the reaction (S)-2,3,4,5-tetrahydrodipicolinate + acetyl-CoA + H2O = L-2-acetamido-6-oxoheptanedioate + CoA. Its pathway is amino-acid biosynthesis; L-lysine biosynthesis via DAP pathway; LL-2,6-diaminopimelate from (S)-tetrahydrodipicolinate (acetylase route): step 1/3. Catalyzes the transfer of an acetyl group from acetyl-CoA to tetrahydrodipicolinate. The sequence is that of 2,3,4,5-tetrahydropyridine-2,6-dicarboxylate N-acetyltransferase from Lacticaseibacillus casei (strain BL23) (Lactobacillus casei).